Reading from the N-terminus, the 392-residue chain is NADH dehydrogenase-like protein YjlD (392 aa).

Belongs to the NADH dehydrogenase family. The cofactor is FAD.

In Bacillus subtilis (strain 168), this protein is NADH dehydrogenase-like protein YjlD (yjlD).